A 566-amino-acid chain; its full sequence is MAKTGKVENLIQNAPEKPGVYLFKKGNRPIYIGKAKNLKKRLLQHLKASEYDSKERAIISNSDNLEWIVTRNEYEALVLEIDLIQQYKPRYNVLHKFGGGYPMLLLTKDEYPTIKVVRGTEHEGELFGPFLQSKKAYKVKKLIHNLFKLRTCDPLPKRSEPCMDYHLGLCSAPCCGFVSKEEYELAVSSARALLTGEVAEVLPKLYEKIEEFSKELMFEKCAHIRDQIIALENLAKGQAVSALPFREGDIFYKFGSRLGLLLVRSSKLVSKEIFDLESDEEVEEVILGYYYSNYVPRKVITNFELSEEVKEWIRNRAKGEVEFSGEIPKELKEVLEENLGEGINEEVLKKEFAEKLGMPVPRVIEGFDISHFYGEDIVGSCVVWKGGKMSKKDYRRYKVKTISRIDDYLALEEVLTRRAKRILKGEVEKPDIWLIDGGKGQLNVGIRVKKRTGLDVKVFSLAKEEEIIYTEDGREIRLKENPILYRVFGEIRDEAHRFALSYNRKLREKRYMEDILSKIKGIGEQKKKIIYKNFETLYDFIEAKDEELRRLGINPSLKQEVKKWLS.

A GIY-YIG domain is found at Glu16 to Val93. In terms of domain architecture, UVR spans Ala199–Leu234.

This sequence belongs to the UvrC family. Interacts with UvrB in an incision complex.

It localises to the cytoplasm. Its function is as follows. The UvrABC repair system catalyzes the recognition and processing of DNA lesions. UvrC both incises the 5' and 3' sides of the lesion. The N-terminal half is responsible for the 3' incision and the C-terminal half is responsible for the 5' incision. This chain is UvrABC system protein C, found in Aquifex aeolicus (strain VF5).